The following is a 984-amino-acid chain: Shutoff protein (984 aa).

The interval 131–231 is disordered; it reads GVAAESDPSD…DLERDALVAP (101 aa). Acidic residues predominate over residues 137-147; it reads DPSDDEPDPEP. Over residues 148 to 159 the composition is skewed to basic and acidic residues; that stretch reads EYDHREADHDSD. Over residues 176–186 the composition is skewed to acidic residues; sequence VDEEPQDDSPS. Over residues 190-202 the composition is skewed to polar residues; that stretch reads TASTVIEEAQTSA. Residues 205–216 show a composition bias toward basic and acidic residues; the sequence is DSHDDDTHRDDG. The tract at residues 411-476 is binding to host EIF4G; that stretch reads LMETLLQPFA…AVRYTATLEL (66 aa). Residues 479–597 enclose the RRM domain; that stretch reads RVFREPSMVK…RLYSLPNPTA (119 aa). 2 disordered regions span residues 810–853 and 876–984; these read GVYK…GNRA and KVGP…RQEE. Tyr-812 carries the phosphotyrosine; by host modification. Over residues 913 to 923 the composition is skewed to basic residues; that stretch reads AGGRRFGRRNT. Low complexity predominate over residues 945-958; that stretch reads RGQQGEHPTTSPSA.

The protein belongs to the adenoviridae shutoff protein family. In terms of assembly, monomer. Interacts with hexon protein; this interaction allows chaperoning and trimerization of hexon proteins. Interacts (via N-terminus) with host initiation factor EIF4G (via C-terminus). Interacts (via RRM domain) with viral mRNAs that contain the tripartite leader; this interaction allows ribosome shunting and expression of viral late mRNAs. In terms of processing, might be cleaved by the viral protease. Phosphorylated. Tyrosine phosphorylation enhances preferential binding to tripartite leader mRNAs and allows ribosome shunting. Post-translationally, methylated. Asymmetric dimethylation by host PRMT1 of the Arg/Gly-rich region may regulate shutoff protein binding to hexon and promote the capsid assembly in the nucleus.

The protein resides in the host cytoplasm. In terms of biological role, protein that inhibits host translation while promoting late viral translation by ribosome shunting. Blocks host cap-dependent translation by binding to eIF4G, displacing MKNK1 from cap initiation complexes and preventing EIF4E phosphorylation. Binds to the tripartite leader sequence of viral late mRNAs and recruits host eIF4G, PABPC1/poly-A binding protein and 40S ribosomes subunits on viral mRNAs, allowing ribosome shunting and efficient translation of late viral mRNAs even though conventional translation via ribosome scanning from the cap has been shut off in the host cell. During assembly, acts as a chaperone protein that helps hexon proteins assembly into trimers. This Galliformes (FAdV-1) protein is Shutoff protein.